The sequence spans 1094 residues: Transcriptional regulator CRZ1 (1094 aa).

Disordered stretches follow at residues 1 to 29 (MADPASPPSFDAIFAQQPVRRSSSTSTSS), 44 to 81 (FNSDAPLVDEPQSLSEQARKQQRDPSKDGNNKRYLDMM), 93 to 428 (GRRQ…FPPS), and 477 to 519 (RAGA…RTLS). Basic and acidic residues-rich tracts occupy residues 60-78 (QARKQQRDPSKDGNNKRYL) and 94-103 (RRQESLRKES). Ser103 carries the phosphoserine modification. Low complexity predominate over residues 148-159 (PNQPQQPSQQPP). Polar residues-rich tracts occupy residues 166-187 (SEQSVHYASVQQPQYSSFQSSG) and 201-217 (GTTSSMNDSMLSSQISP). Composition is skewed to low complexity over residues 228–241 (QPPQQQQQQQQQQQ) and 252–262 (EQQQQYAQGEG). Over residues 286-324 (VISNTSHPSQYPSRTSSPFPQQSQSNMVPASTVNQTRTE) the composition is skewed to polar residues. A phosphoserine mark is found at Ser288 and Ser329. Over residues 325–342 (SFPASRSPSPFAPQQASQ) the composition is skewed to low complexity. Composition is skewed to polar residues over residues 343–379 (TEASNHVVSTPSMGQPTYPRASSSPRTNPNSPFFNKP) and 396–412 (IVTQSTSNNHSKGLNQP). The segment covering 477 to 493 (RAGAARGAQRQGPQGQG) has biased composition (low complexity). Polar residues predominate over residues 507-519 (PSPQSHPLPRTLS). 4 positions are modified to phosphoserine: Ser508, Ser569, Ser765, and Ser810. Residues 835-888 (ITGDDGSLLPPSNRGHAMSHSRHSSTSSIRSASPALSISSQGSSFSHHSPRMDM) are disordered. The span at 858-881 (SSTSSIRSASPALSISSQGSSFSH) shows a compositional bias: low complexity. The segment at 944-968 (FKCPVPGCGSTFTRHFNLKGHLRSH) adopts a C2H2-type 1 zinc-finger fold. The C2H2-type 2; degenerate zinc finger occupies 1007-1029 (FECEGCGKKFARLDALTRHHKSE). The segment at 1037–1094 (THPLPTNFDGSPMSESQYKTYKGIKSTPEGSGRRLSSTASGSGSGKRRSKKSETSEED) is disordered.

Post-translationally, phosphorylated. Dephosphorylated by calcineurin (CNA1) which promotes nuclear localization.

It is found in the cytoplasm. The protein localises to the cytosol. Its subcellular location is the nucleus. Its function is as follows. DNA-binding transcriptional activator that interacts with calcineurin-dependent response element (CDRE) promoters. Activates expression of genes required to maintain cell wall integrity during stress. Activates expression of genes required for transepithelial migration through the host blood-brain barrier. Required for adaptation to host temperature during infection. This Cryptococcus neoformans var. grubii serotype A (strain H99 / ATCC 208821 / CBS 10515 / FGSC 9487) (Filobasidiella neoformans var. grubii) protein is Transcriptional regulator CRZ1.